The chain runs to 115 residues: Large ribosomal subunit protein bL20 (115 aa).

Belongs to the bacterial ribosomal protein bL20 family.

Binds directly to 23S ribosomal RNA and is necessary for the in vitro assembly process of the 50S ribosomal subunit. It is not involved in the protein synthesizing functions of that subunit. This Borreliella burgdorferi (strain ATCC 35210 / DSM 4680 / CIP 102532 / B31) (Borrelia burgdorferi) protein is Large ribosomal subunit protein bL20 (rplT).